The following is a 346-amino-acid chain: S-adenosylmethionine:tRNA ribosyltransferase-isomerase (346 aa).

The protein belongs to the QueA family. As to quaternary structure, monomer.

The protein resides in the cytoplasm. It carries out the reaction 7-aminomethyl-7-carbaguanosine(34) in tRNA + S-adenosyl-L-methionine = epoxyqueuosine(34) in tRNA + adenine + L-methionine + 2 H(+). It participates in tRNA modification; tRNA-queuosine biosynthesis. Functionally, transfers and isomerizes the ribose moiety from AdoMet to the 7-aminomethyl group of 7-deazaguanine (preQ1-tRNA) to give epoxyqueuosine (oQ-tRNA). In Lysinibacillus sphaericus (strain C3-41), this protein is S-adenosylmethionine:tRNA ribosyltransferase-isomerase.